Reading from the N-terminus, the 358-residue chain is Thiol protease aleurain (358 aa).

The signal sequence occupies residues 1-21 (MSAKTILSSVVLVVLVAASAA). An interaction with VSR1 region spans residues 22–42 (ANIGFDESNPIRMVSDGLREV). Positions 22-140 (ANIGFDESNP…KGSHKVTEAA (119 aa)) are cleaved as a propeptide — activation peptide. Residue Asn-125 is glycosylated (N-linked (GlcNAc...) asparagine). Cystine bridges form between Cys-162–Cys-205 and Cys-196–Cys-238. Residue Cys-165 is part of the active site. A glycan (N-linked (GlcNAc...) asparagine) is linked at Asn-254. Cysteines 296 and 346 form a disulfide. Active-site residues include His-305 and Asn-325.

It belongs to the peptidase C1 family. As to quaternary structure, interacts with VSR1/BP80B. In terms of tissue distribution, expressed in leaves (at protein level).

The protein localises to the vacuole. The catalysed reaction is Hydrolysis of proteins, acting as an aminopeptidase (notably, cleaving Arg-|-Xaa bonds) as well as an endopeptidase.. In terms of biological role, may play a role in proteolysis leading to mobilization of nitrogen during senescence and starvation. This is Thiol protease aleurain from Arabidopsis thaliana (Mouse-ear cress).